The sequence spans 229 residues: Orotidine 5'-phosphate decarboxylase (229 aa).

Residues aspartate 10, lysine 32, 59–68 (DLKFHDIPNT), threonine 119, arginine 180, glutamine 189, glycine 209, and arginine 210 contribute to the substrate site. Lysine 61 (proton donor) is an active-site residue.

Belongs to the OMP decarboxylase family. Type 1 subfamily. As to quaternary structure, homodimer.

It catalyses the reaction orotidine 5'-phosphate + H(+) = UMP + CO2. Its pathway is pyrimidine metabolism; UMP biosynthesis via de novo pathway; UMP from orotate: step 2/2. In terms of biological role, catalyzes the decarboxylation of orotidine 5'-monophosphate (OMP) to uridine 5'-monophosphate (UMP). In Legionella pneumophila (strain Corby), this protein is Orotidine 5'-phosphate decarboxylase.